Reading from the N-terminus, the 878-residue chain is MAQSSPKASSRHTPMMRQFLRIKAEHPDILLFYRMGDFYELFYEDAERAAKLLDITLTTRGQSAGEPIPMAGVPVHAVESYLARLVRQGESVAICEQIGDPDNSKGPVERQVVRIVTPGTLTDEALLEERQSNILAALSCHQSRWGLASLELSSGRFSLTEPADEQALAADLERLNPAELLVDEALTLPTGLAVGPGLTRRPPWHFELDTATDLLTEQFGTRDLAGFGAQDHSAGLAAAGALLQYVRETQRSALPHIRRLQVEHGDQAIVIDAASRRNLELERNLSGGTEHTLASVLDSTVNAMGSRLLRRWLNRPLRDRTTLQARHQAVEILMAESLTEALRRQLRGISDVERILARVALGSARPRDLTGLRETLARLPDIQATLTGAGAPRLVDLAAQCGEHPQTLDHLRRALVDQPPVVIRDGGVIAEGYDATLDELRTLSENADNYLLELEQRERERTGISTLKVGYNRVHGYYIEVTRAQADAVPAEYVRRQTLKGVERYILPELKAFEDKVLSAREKALAREKVLYEQLLASLASDLAPLQDTAAALAELDTLAAFAERAQALDYSRPELRDGAGLRIEAGRHPVVEYSLDGPFVPNDLTLDDRRRMLIITGPNMGGKSTYMRQVALITLMAHIGSFVPARAASLGPVDRIFTRIGASDDLAGGRSTFMVEMTETANILHNATAQSLVLMDEIGRGTSTFDGLALAWATAERLARDQRAYTLFATHYFEMTALPEQCPGASNVHLDAVEHGERIVFLHAVKPGPASQSYGLQVAALAGVPGPVLEAAREKLRALEEESSRQRAEPDQLSLFAEPAPPPPLPSAAEQALSEVDPDELSPRQALDLLYRLKALTSGEEGADKKARGDAVDARSR.

618–625 (GPNMGGKS) lines the ATP pocket. Basic and acidic residues-rich tracts occupy residues 800 to 811 (LEEESSRQRAEP) and 863 to 878 (GADK…ARSR). Disordered regions lie at residues 800–842 (LEEE…PDEL) and 859–878 (SGEE…ARSR).

The protein belongs to the DNA mismatch repair MutS family.

In terms of biological role, this protein is involved in the repair of mismatches in DNA. It is possible that it carries out the mismatch recognition step. This protein has a weak ATPase activity. The sequence is that of DNA mismatch repair protein MutS from Alkalilimnicola ehrlichii (strain ATCC BAA-1101 / DSM 17681 / MLHE-1).